A 100-amino-acid chain; its full sequence is Ribosomal processing cysteine protease Prp (100 aa).

Catalysis depends on His16, which acts as the Proton donor. Residue Cys28 is the Nucleophile of the active site.

This sequence belongs to the Prp family. Homodimer.

In terms of biological role, an essential cysteine protease that cleaves the N-terminus from ribosomal protein bL27. The sequence is that of Ribosomal processing cysteine protease Prp from Mycoplasma pneumoniae (strain ATCC 29342 / M129 / Subtype 1) (Mycoplasmoides pneumoniae).